The following is an 83-amino-acid chain: Gas vesicle protein G1 (83 aa).

Belongs to the gas vesicle GvpG family. As to quaternary structure, gvpF to GvpM interact with each other in vitro, and may form multi-subunit complex(es). Might interact with GvpA1.

The protein localises to the gas vesicle. In terms of biological role, proteins GvpF to GvpM might be involved in nucleating gas vesicle formation. A minor component of the gas vesicle. Gas vesicles are hollow, gas filled proteinaceous nanostructures found in several microbial planktonic microorganisms. They allow positioning of halobacteria at the optimal depth for growth in the poorly aerated, shallow brine pools of their habitat. Its function is as follows. Expression of a 9.5 kb p-vac DNA fragment containing 2 divergently transcribed regions (gvpD-gvpE-gvpF-gvpG-gvpH-gvpI-gvpJ-gvpK-gvpL-gvpM and gvpA-gvpC-gvpN-gvpO) allows H.volcanii to produce gas vesicles. A minimal gas vesicle can be made in H.volcanii by gvpA1-gvpO1 plus gvpF1-gvpG1-gvpJ1-gvpK1-gvpL1-gvpM1; lack of enough GvpJ1 prevents formation. A similar region restores gas vesicle production in H.halobium without the p-vac locus, but it still has the c-vac locus. The protein is Gas vesicle protein G1 (gvpG11) of Halobacterium salinarum (strain ATCC 700922 / JCM 11081 / NRC-1) (Halobacterium halobium).